The following is a 280-amino-acid chain: Protein phosphatase 1 regulatory subunit 3B-A (280 aa).

The PP1-binding motif motif lies at 58-61 (RVSF). The 109-residue stretch at 121 to 229 (RNRLQADSVC…SNKSLNYKIA (109 aa)) folds into the CBM21 domain.

As to quaternary structure, interacts with glycogen, PPP1CC catalytic subunit of PP1 and PYGL. Associates with glycogen particles. Forms complexes with debranching enzyme, glycogen phosphorylase, glycogen synthase and phosphorylase kinase which is necessary for its regulation of PP1 activity.

In terms of biological role, acts as a glycogen-targeting subunit for phosphatase PP1. Facilitates interaction of the PP1 with enzymes of the glycogen metabolism and regulates its activity. Suppresses the rate at which PP1 dephosphorylates (inactivates) glycogen phosphorylase and enhances the rate at which it activates glycogen synthase and therefore limits glycogen breakdown. This is Protein phosphatase 1 regulatory subunit 3B-A (ppp1r3b-a) from Xenopus laevis (African clawed frog).